Here is a 234-residue protein sequence, read N- to C-terminus: Glucosamine-6-phosphate deaminase (234 aa).

Residue aspartate 62 is the Proton acceptor; for enolization step of the active site. Asparagine 128 (for ring-opening step) is an active-site residue. Catalysis depends on histidine 130, which acts as the Proton acceptor; for ring-opening step. The active-site For ring-opening step is glutamate 135.

It belongs to the glucosamine/galactosamine-6-phosphate isomerase family. NagB subfamily.

The catalysed reaction is alpha-D-glucosamine 6-phosphate + H2O = beta-D-fructose 6-phosphate + NH4(+). It functions in the pathway amino-sugar metabolism; N-acetylneuraminate degradation; D-fructose 6-phosphate from N-acetylneuraminate: step 5/5. Its function is as follows. Catalyzes the reversible isomerization-deamination of glucosamine 6-phosphate (GlcN6P) to form fructose 6-phosphate (Fru6P) and ammonium ion. This Lactobacillus delbrueckii subsp. bulgaricus (strain ATCC 11842 / DSM 20081 / BCRC 10696 / JCM 1002 / NBRC 13953 / NCIMB 11778 / NCTC 12712 / WDCM 00102 / Lb 14) protein is Glucosamine-6-phosphate deaminase.